The sequence spans 202 residues: MHFSRTSLILFAAGLASAQLPNVPGCSLDCFVAALSADGCSSLTDFACHCQKPELVSNITPCVQSACNIADQSSVSVAVVSQCSAAGHPISVPPVGAASTTASETATTTESSTQTTTGTSSTASKTSSSAASSTPSSSSASSSHHHSSSSALTTRTLTSTEPSSQSTSASAAATTTLSGNAGSEKANVAGVVAVAAAALYLL.

A signal peptide spans 1–18 (MHFSRTSLILFAAGLASA). The CFEM domain occupies 19–108 (QLPNVPGCSL…STTASETATT (90 aa)). 4 cysteine pairs are disulfide-bonded: Cys-26–Cys-67, Cys-30–Cys-62, Cys-40–Cys-48, and Cys-50–Cys-83. Asp-45 contacts heme. Residues 94–171 (PVGAASTTAS…PSSQSTSASA (78 aa)) form a disordered region. Over residues 97-171 (AASTTASETA…PSSQSTSASA (75 aa)) the composition is skewed to low complexity. The GPI-anchor amidated asparagine moiety is linked to residue Asn-180. The propeptide at 181 to 202 (AGSEKANVAGVVAVAAAALYLL) is removed in mature form.

This sequence belongs to the RBT5 family. In terms of processing, the GPI-anchor is attached to the protein in the endoplasmic reticulum and serves to target the protein to the cell surface. There, the glucosamine-inositol phospholipid moiety is cleaved off and the GPI-modified mannoprotein is covalently attached via its lipidless GPI glycan remnant to the 1,6-beta-glucan of the outer cell wall layer.

Its subcellular location is the secreted. It localises to the cell wall. It is found in the cell membrane. In terms of biological role, GPI-anchored cell wall protein involved in stabilizing the cell wall. Not implicated in virulence, heme uptake and biofilm formation. This is GPI-anchored hemophore cfmB from Aspergillus fumigatus (strain ATCC MYA-4609 / CBS 101355 / FGSC A1100 / Af293) (Neosartorya fumigata).